The primary structure comprises 438 residues: 3-phosphoshikimate 1-carboxyvinyltransferase (438 aa).

Residues Lys-26, Ser-27, and Arg-31 each contribute to the 3-phosphoshikimate site. Lys-26 provides a ligand contact to phosphoenolpyruvate. The phosphoenolpyruvate site is built by Gly-99 and Arg-127. 3-phosphoshikimate contacts are provided by Ser-172, Gln-174, Asp-320, and Lys-347. Gln-174 serves as a coordination point for phosphoenolpyruvate. Residue Asp-320 is the Proton acceptor of the active site. Positions 351 and 392 each coordinate phosphoenolpyruvate.

This sequence belongs to the EPSP synthase family. In terms of assembly, monomer.

It is found in the cytoplasm. The enzyme catalyses 3-phosphoshikimate + phosphoenolpyruvate = 5-O-(1-carboxyvinyl)-3-phosphoshikimate + phosphate. It functions in the pathway metabolic intermediate biosynthesis; chorismate biosynthesis; chorismate from D-erythrose 4-phosphate and phosphoenolpyruvate: step 6/7. Its function is as follows. Catalyzes the transfer of the enolpyruvyl moiety of phosphoenolpyruvate (PEP) to the 5-hydroxyl of shikimate-3-phosphate (S3P) to produce enolpyruvyl shikimate-3-phosphate and inorganic phosphate. This Xanthomonas campestris pv. campestris (strain B100) protein is 3-phosphoshikimate 1-carboxyvinyltransferase.